The primary structure comprises 291 residues: Transcription antitermination protein NusB (291 aa).

The protein belongs to the NusB family.

Its function is as follows. Involved in transcription antitermination. Required for transcription of ribosomal RNA (rRNA) genes. Binds specifically to the boxA antiterminator sequence of the ribosomal RNA (rrn) operons. The chain is Transcription antitermination protein NusB from Synechococcus sp. (strain JA-2-3B'a(2-13)) (Cyanobacteria bacterium Yellowstone B-Prime).